The sequence spans 198 residues: FMN-dependent NADH:quinone oxidoreductase (198 aa).

92–95 lines the FMN pocket; it reads MWNL.

The protein belongs to the azoreductase type 1 family. In terms of assembly, homodimer. Requires FMN as cofactor.

The enzyme catalyses 2 a quinone + NADH + H(+) = 2 a 1,4-benzosemiquinone + NAD(+). It catalyses the reaction N,N-dimethyl-1,4-phenylenediamine + anthranilate + 2 NAD(+) = 2-(4-dimethylaminophenyl)diazenylbenzoate + 2 NADH + 2 H(+). Quinone reductase that provides resistance to thiol-specific stress caused by electrophilic quinones. In terms of biological role, also exhibits azoreductase activity. Catalyzes the reductive cleavage of the azo bond in aromatic azo compounds to the corresponding amines. This Clostridium beijerinckii (strain ATCC 51743 / NCIMB 8052) (Clostridium acetobutylicum) protein is FMN-dependent NADH:quinone oxidoreductase.